A 747-amino-acid polypeptide reads, in one-letter code: Plakophilin-1 (747 aa).

Residues 1-234 (MNHSPLKTAL…SFGHSRASSK (234 aa)) form a required for binding to single stranded DNA region. The interval 1–286 (MNHSPLKTAL…ESAKQQVYQL (286 aa)) is required for interaction with EIF4A1. A Phosphoserine modification is found at Ser-4. The segment at 48-68 (TVKRQKSKSSQSSTLSHSNRG) is disordered. 2 phosphorylation in this region is required for cytoplasmic localization and protein stabilization regions span residues 54-69 (SKSS…NRGS) and 116-191 (RFSS…STCS). At Ser-118 the chain carries Phosphoserine; by PKB/AKT2. Residues Ser-119, Ser-121, and Ser-142 each carry the phosphoserine modification. Positions 160–269 (YCDPRGTLRK…KYQAIGAYYI (110 aa)) are required for WNT-mediated nuclear localization. ARM repeat units lie at residues 243–274 (SGLT…HTCF), 275–316 (QDES…NLVF), 317–359 (RSTT…NLSS), 360–415 (TDEL…KRLG), 416–463 (MREL…NCVA), 525–556 (NYDC…LNLM), 557–603 (GKSK…IARL), 604–649 (LQSG…SHTG), and 650–713 (NTSN…DMWS).

This sequence belongs to the beta-catenin family. As to quaternary structure, part of a complex that contains DSG3, PKP1, YAP1 and YWHAG; the complex is required for localization of DSG3 and YAP1 to the cell membrane in keratinocytes. Interacts with DSP. Interacts (via N-terminus) with KRT5/CK5, KRT8/CK8 (via rod domain), KRT15/CK15 and KRT18/CK18 (via rod domain) as part of intermediate filaments. Interacts with VIM (via rod domain). Interacts with DSP. Interacts with DES. Interacts with FXR1; the interaction may facilitate the binding of PKP1 to PKP2, PKP3 and DSP mRNA. Interacts (via N-terminus) with EIF4A1; the interaction promotes EIF4A1 recruitment to the cap-dependent translation complex and EIF4A1 ATPase activity. Interacts with TJP1/ZO-1; the interaction facilitates TJP1/ZO-1 localization to the plasma membrane. Interacts (when phosphorylated) with YWHAG; the interaction results in translocation of PKP1 to the cytoplasm and loss of intercellular adhesion in keratinocytes. In terms of processing, phosphorylated by AKT2; required for interaction with YWHAG and subsequent localization away from desmosomes to the cytoplasm. Phosphorylation of Ser-118 by AKT2 promotes PKP1-driven cap-dependent mRNA translation and decreases intercellular adhesion, phosphorylation is promoted by insulin. Phosphorylation by RIPK4 at the N-terminus is required for its role in differentiation of keratinocytes and DSG1 localization at cell junctions. In terms of tissue distribution, expressed in stratified squamous, complex, glandular duct and bladder epithelia (at protein level). Widely expressed (at protein level).

Its subcellular location is the cell junction. The protein resides in the desmosome. The protein localises to the nucleus. It is found in the cytoplasm. It localises to the perinuclear region. Its subcellular location is the cell membrane. The protein resides in the stress granule. Functionally, a component of desmosome cell-cell junctions which are required for positive regulation of cellular adhesion. Plays a role in desmosome protein expression regulation and localization to the desmosomal plaque, thereby maintaining cell sheet integrity and anchorage of desmosomes to intermediate filaments. Required for localization of DSG3 and YAP1 to the cell membrane in keratinocytes in response to mechanical strain, via the formation of an interaction complex composed of DSG3, YAP1, PKP1 and YWHAG. Positively regulates differentiation of keratinocytes, potentially via promoting localization of DSG1 at desmosome cell junctions. Required for calcium-independent development and maturation of desmosome plaques specifically at lateral cell-cell contacts in differentiating keratinocytes. Plays a role in the maintenance of DSG3 protein abundance, DSG3 clustering and localization of these clusters to the cell membrane in keratinocytes. May also promote keratinocyte proliferation and morphogenesis during postnatal development. Required for tight junction inside-out transepidermal barrier function of the skin. Promotes Wnt-mediated proliferation and differentiation of ameloblasts, via facilitating TJP1/ZO-1 localization to tight junctions. Binds single-stranded DNA (ssDNA), and may thereby play a role in sensing DNA damage and promoting cell survival. Positively regulates cap-dependent translation and as a result cell proliferation, via recruitment of EIF4A1 to the initiation complex and promotion of EIF4A1 ATPase activity. Regulates the mRNA stability and protein abundance of desmosome components PKP2, PKP3, DSC2 and DSP, potentially via its interaction with FXR1. The protein is Plakophilin-1 (PKP1) of Homo sapiens (Human).